Consider the following 106-residue polypeptide: uncharacterized protein (106 aa).

This sequence belongs to the HesB/IscA family.

This is an uncharacterized protein from Sinorhizobium fredii (strain NBRC 101917 / NGR234).